Consider the following 87-residue polypeptide: Small ribosomal subunit protein uS15c (87 aa).

Belongs to the universal ribosomal protein uS15 family. As to quaternary structure, part of the 30S ribosomal subunit.

The protein localises to the plastid. It is found in the chloroplast. The polypeptide is Small ribosomal subunit protein uS15c (rps15) (Solanum lycopersicum (Tomato)).